A 285-amino-acid chain; its full sequence is Eukaryotic translation initiation factor 3 subunit F-2 (285 aa).

Positions 11–145 (VYLKPLVFFQ…TRLYCAVEMG (135 aa)) constitute an MPN domain.

It belongs to the eIF-3 subunit F family. As to quaternary structure, component of the eukaryotic translation initiation factor 3 (eIF-3) complex. The eIF-3 complex interacts with pix.

The protein resides in the cytoplasm. Functionally, component of the eukaryotic translation initiation factor 3 (eIF-3) complex, which is involved in protein synthesis of a specialized repertoire of mRNAs and, together with other initiation factors, stimulates binding of mRNA and methionyl-tRNAi to the 40S ribosome. The eIF-3 complex specifically targets and initiates translation of a subset of mRNAs involved in cell proliferation. The polypeptide is Eukaryotic translation initiation factor 3 subunit F-2 (Drosophila melanogaster (Fruit fly)).